We begin with the raw amino-acid sequence, 408 residues long: Multidrug resistance protein MdtG (408 aa).

Helical transmembrane passes span 16 to 36 (LIVA…VMPF), 58 to 78 (IVFS…GGLA), 92 to 112 (LGMG…QFLI), 115 to 135 (ALLG…ATQV), 146 to 166 (TLST…GLLA), 173 to 193 (PVFF…LFCI), 221 to 241 (ILSL…IAPI), 256 to 276 (VAFI…LSAP), 290 to 310 (ILIT…YVQT), and 378 to 398 (AVFL…WNSL).

This sequence belongs to the major facilitator superfamily. DHA1 family. MdtG (TC 2.A.1.2.20) subfamily.

It is found in the cell inner membrane. Functionally, confers resistance to fosfomycin and deoxycholate. The chain is Multidrug resistance protein MdtG from Escherichia coli (strain SMS-3-5 / SECEC).